We begin with the raw amino-acid sequence, 376 residues long: MSKRDYYEVLGVARGASDEELKKAYRRCAMKHHPDRNPGDAAAEAAFKECKEAYEVLSDGNKRRAYDAHGHAAFEHGMGGGGGGPGSPDMGDIFGDIFGNIFGGGAAGPRAARRGADVGYVLELDLEEAVAGIERRIEIPTLIECVSCHGSGSEDGKVQTCGTCHGRGQVRIQRGIFAMQQSCPHCDGRGTLIQNPCKTCHGAGRVEENKVLSIKVPAGVDTGDRIRLAGEGEAGPAGTPPGDLYVEVRVREHAIFQRDGDDLHCEVPIRISQAALGDTVRVATLGGEAEIRIPAETQTGKLFRLRGKGVRSVRSRSEGDLYCRVVVETPVNLTADQRELLQQFEATFTGEDARKHSPKSATFIDGVKGFWDRMTS.

One can recognise a J domain in the interval 5–70 (DYYEVLGVAR…NKRRAYDAHG (66 aa)). The CR-type zinc-finger motif lies at 132–209 (GIERRIEIPT…CHGAGRVEEN (78 aa)). Residues cysteine 145, cysteine 148, cysteine 161, cysteine 164, cysteine 183, cysteine 186, cysteine 197, and cysteine 200 each coordinate Zn(2+). CXXCXGXG motif repeat units lie at residues 145–152 (CVSCHGSG), 161–168 (CGTCHGRG), 183–190 (CPHCDGRG), and 197–204 (CKTCHGAG).

The protein belongs to the DnaJ family. In terms of assembly, homodimer. Zn(2+) is required as a cofactor.

Its subcellular location is the cytoplasm. Functionally, participates actively in the response to hyperosmotic and heat shock by preventing the aggregation of stress-denatured proteins and by disaggregating proteins, also in an autonomous, DnaK-independent fashion. Unfolded proteins bind initially to DnaJ; upon interaction with the DnaJ-bound protein, DnaK hydrolyzes its bound ATP, resulting in the formation of a stable complex. GrpE releases ADP from DnaK; ATP binding to DnaK triggers the release of the substrate protein, thus completing the reaction cycle. Several rounds of ATP-dependent interactions between DnaJ, DnaK and GrpE are required for fully efficient folding. Also involved, together with DnaK and GrpE, in the DNA replication of plasmids through activation of initiation proteins. In Xanthomonas oryzae pv. oryzae (strain PXO99A), this protein is Chaperone protein DnaJ.